The sequence spans 80 residues: Defensin-like protein 16 (80 aa).

Residues 1 to 29 (MAKFASIITLIFAALVLFAAFDAPAMVEA) form the signal peptide. Q30 carries the pyrrolidone carboxylic acid modification. Intrachain disulfides connect C33–C80, C44–C65, C50–C74, and C54–C76.

This sequence belongs to the DEFL family. In terms of tissue distribution, predominantly expressed in leaves.

It localises to the secreted. Confers broad-spectrum resistance to pathogens. Has antifungal activity in vitro. The sequence is that of Defensin-like protein 16 (PDF1.2A) from Arabidopsis thaliana (Mouse-ear cress).